The primary structure comprises 333 residues: Biotin synthase (333 aa).

The 230-residue stretch at 47–276 folds into the Radical SAM core domain; the sequence is FFKNQMEFCS…KSEIRLCGGR (230 aa). Residues Cys-65, Cys-69, and Cys-72 each coordinate [4Fe-4S] cluster. [2Fe-2S] cluster contacts are provided by Cys-109, Cys-141, Cys-201, and Arg-271.

It belongs to the radical SAM superfamily. Biotin synthase family. As to quaternary structure, homodimer. [4Fe-4S] cluster is required as a cofactor. The cofactor is [2Fe-2S] cluster.

It catalyses the reaction (4R,5S)-dethiobiotin + (sulfur carrier)-SH + 2 reduced [2Fe-2S]-[ferredoxin] + 2 S-adenosyl-L-methionine = (sulfur carrier)-H + biotin + 2 5'-deoxyadenosine + 2 L-methionine + 2 oxidized [2Fe-2S]-[ferredoxin]. Its pathway is cofactor biosynthesis; biotin biosynthesis; biotin from 7,8-diaminononanoate: step 2/2. In terms of biological role, catalyzes the conversion of dethiobiotin (DTB) to biotin by the insertion of a sulfur atom into dethiobiotin via a radical-based mechanism. This chain is Biotin synthase, found in Sulfurihydrogenibium sp. (strain YO3AOP1).